Here is a 265-residue protein sequence, read N- to C-terminus: MDNLLTALILSIVEGLTEFLPVSSSGHLILAGDLLGFVGEKAATFDVVIQLGAIMAVVVLYWKRFWGLVRPQPYARFAGRRGIVLLMLTSLPACILGLLLHAYIKEYLFRPATVLIALVVGAICMILVEKRKFKPTCISLDDMTPRLALGIGCFQCLALWPGFSRSAATIMGGMLLGAKRPLAAEYSFIAAVPIMVAATGYDLLKNLSMFTAADIPFFLVGMIGSFVSALLAVKVFVALVGRMTLIPFACYRLLIAPFVYYFMVN.

Helical transmembrane passes span 42–62, 82–102, 108–128, 157–177, 181–201, 217–237, and 244–264; these read AATF…VLYW, GIVL…LLHA, LFRP…MILV, LALW…MLLG, PLAA…ATGY, FFLV…KVFV, and TLIP…YFMV.

The protein belongs to the UppP family.

The protein localises to the cell inner membrane. It catalyses the reaction di-trans,octa-cis-undecaprenyl diphosphate + H2O = di-trans,octa-cis-undecaprenyl phosphate + phosphate + H(+). Its function is as follows. Catalyzes the dephosphorylation of undecaprenyl diphosphate (UPP). Confers resistance to bacitracin. This chain is Undecaprenyl-diphosphatase, found in Desulfovibrio desulfuricans (strain ATCC 27774 / DSM 6949 / MB).